Reading from the N-terminus, the 503-residue chain is ATP synthase subunit alpha, chloroplastic (503 aa).

170–177 (GDRQTGKT) is an ATP binding site.

The protein belongs to the ATPase alpha/beta chains family. In terms of assembly, F-type ATPases have 2 components, CF(1) - the catalytic core - and CF(0) - the membrane proton channel. CF(1) has five subunits: alpha(3), beta(3), gamma(1), delta(1), epsilon(1). CF(0) has four main subunits: a, b, b' and c.

It localises to the plastid. It is found in the chloroplast thylakoid membrane. It catalyses the reaction ATP + H2O + 4 H(+)(in) = ADP + phosphate + 5 H(+)(out). Produces ATP from ADP in the presence of a proton gradient across the membrane. The alpha chain is a regulatory subunit. The protein is ATP synthase subunit alpha, chloroplastic of Thalassiosira pseudonana (Marine diatom).